Here is a 473-residue protein sequence, read N- to C-terminus: Ribulose bisphosphate carboxylase large chain 1 (473 aa).

Substrate contacts are provided by Asn-116 and Thr-166. Catalysis depends on Lys-168, which acts as the Proton acceptor. Lys-170 contributes to the substrate binding site. Positions 194, 196, and 197 each coordinate Mg(2+). The residue at position 194 (Lys-194) is an N6-carboxylysine. His-287 acts as the Proton acceptor in catalysis. Arg-288, His-320, and Ser-372 together coordinate substrate.

This sequence belongs to the RuBisCO large chain family. Type I subfamily. As to quaternary structure, heterohexadecamer of 8 large chains and 8 small chains. The cofactor is Mg(2+).

It catalyses the reaction 2 (2R)-3-phosphoglycerate + 2 H(+) = D-ribulose 1,5-bisphosphate + CO2 + H2O. It carries out the reaction D-ribulose 1,5-bisphosphate + O2 = 2-phosphoglycolate + (2R)-3-phosphoglycerate + 2 H(+). Its function is as follows. RuBisCO catalyzes two reactions: the carboxylation of D-ribulose 1,5-bisphosphate, the primary event in carbon dioxide fixation, as well as the oxidative fragmentation of the pentose substrate. Both reactions occur simultaneously and in competition at the same active site. The protein is Ribulose bisphosphate carboxylase large chain 1 of Nitrobacter winogradskyi (strain ATCC 25391 / DSM 10237 / CIP 104748 / NCIMB 11846 / Nb-255).